The sequence spans 680 residues: DNA ligase (680 aa).

NAD(+) is bound by residues 35–39, 86–87, and E111; these read DADFD and SL. K113 functions as the N6-AMP-lysine intermediate in the catalytic mechanism. R134, E174, K290, and K314 together coordinate NAD(+). Zn(2+) contacts are provided by C408, C411, C427, and C433. One can recognise a BRCT domain in the interval 597–680; sequence VAEQTLEGLT…RLLNTGSADE (84 aa).

The protein belongs to the NAD-dependent DNA ligase family. LigA subfamily. Mg(2+) serves as cofactor. Requires Mn(2+) as cofactor.

The enzyme catalyses NAD(+) + (deoxyribonucleotide)n-3'-hydroxyl + 5'-phospho-(deoxyribonucleotide)m = (deoxyribonucleotide)n+m + AMP + beta-nicotinamide D-nucleotide.. In terms of biological role, DNA ligase that catalyzes the formation of phosphodiester linkages between 5'-phosphoryl and 3'-hydroxyl groups in double-stranded DNA using NAD as a coenzyme and as the energy source for the reaction. It is essential for DNA replication and repair of damaged DNA. The protein is DNA ligase of Corynebacterium glutamicum (strain ATCC 13032 / DSM 20300 / JCM 1318 / BCRC 11384 / CCUG 27702 / LMG 3730 / NBRC 12168 / NCIMB 10025 / NRRL B-2784 / 534).